A 255-amino-acid chain; its full sequence is 4-hydroxy-tetrahydrodipicolinate reductase (255 aa).

NAD(+) contacts are provided by residues 9-14, 89-91, and 115-118; these read GFKGKM, GTT, and APNF. His-145 acts as the Proton donor/acceptor in catalysis. His-146 provides a ligand contact to (S)-2,3,4,5-tetrahydrodipicolinate. Lys-149 serves as the catalytic Proton donor. 155-156 is a (S)-2,3,4,5-tetrahydrodipicolinate binding site; it reads GT.

This sequence belongs to the DapB family.

The protein resides in the cytoplasm. It carries out the reaction (S)-2,3,4,5-tetrahydrodipicolinate + NAD(+) + H2O = (2S,4S)-4-hydroxy-2,3,4,5-tetrahydrodipicolinate + NADH + H(+). The enzyme catalyses (S)-2,3,4,5-tetrahydrodipicolinate + NADP(+) + H2O = (2S,4S)-4-hydroxy-2,3,4,5-tetrahydrodipicolinate + NADPH + H(+). Its pathway is amino-acid biosynthesis; L-lysine biosynthesis via DAP pathway; (S)-tetrahydrodipicolinate from L-aspartate: step 4/4. Functionally, catalyzes the conversion of 4-hydroxy-tetrahydrodipicolinate (HTPA) to tetrahydrodipicolinate. The protein is 4-hydroxy-tetrahydrodipicolinate reductase of Streptococcus suis (strain 98HAH33).